Reading from the N-terminus, the 1719-residue chain is Cilia- and flagella-associated protein 43 (1719 aa).

A disordered region spans residues 94–120; sequence VREEGAGGGADKPSGSGAVSGKQQSSG. WD repeat units lie at residues 122–165, 174–214, 226–263, 308–345, 413–452, and 513–552; these read SVVL…GRCR, SSTS…EKAV, PAGA…PLQL, TSGA…AAAI, CHVG…LLGR, and LHSA…GRVR. The disordered stretch occupies residues 569–596; sequence TWPRSDGGSGAASGHAQAGPVSTTSAEG. WD repeat units lie at residues 697-736 and 749-788; these read AHAR…LAAQ and ITAG…AVAN. Residues 1022-1045 form a disordered region; the sequence is RAKQEAARKADEDAAKRSAKDNAG. Residues 1073–1114 form a WD 9 repeat; sequence PKPAWLVALGVEPDAVNPKLITEEQNRELKEWQAKEKSLQEE. Disordered regions lie at residues 1220 to 1269, 1277 to 1296, and 1325 to 1372; these read MPGG…AAAA, ATAA…GAAG, and TLNP…AAAA. The segment covering 1221–1233 has biased composition (gly residues); that stretch reads PGGGAIGAAGGHQ. The span at 1257-1269 shows a compositional bias: low complexity; that stretch reads ASLAHSPSGAAAA. Positions 1344 to 1358 are enriched in low complexity; it reads SSALHPSHSHASVHG. 2 coiled-coil regions span residues 1524–1609 and 1651–1679; these read AAQW…RSAQ and HKKL…RLRT. The interval 1685 to 1719 is disordered; the sequence is ESGAVAGMPSPPRRLPPDIKLLAGSPSSSSVAGRT. Positions 1709 to 1719 are enriched in polar residues; that stretch reads SPSSSSVAGRT.

This sequence belongs to the CFAP43 family.

It is found in the cell projection. Its subcellular location is the cilium. The protein resides in the flagellum. The protein localises to the cytoplasm. It localises to the cytoskeleton. It is found in the flagellum axoneme. Flagellar protein involved in flagellum axoneme organization and function. The chain is Cilia- and flagella-associated protein 43 from Chlamydomonas reinhardtii (Chlamydomonas smithii).